The primary structure comprises 367 residues: MLRPIITLLCLTLMLCTAAGPAGATRIKDIARLQGVRSNQLVGYGLVVGLNGSGDSDSTAFTVRSLVNMMERLGVTVDVNDVKVDNVAAVIVTAELPAFSKTGSTIDVLVSSIGDADSLVGGSLLMTPLKGADGKIYAVAQGPLAVGALAFGGKAATVQKNHPTVGRIPGGALVEREVPFRLTPGAELHYQLTNPDFTTVTRMAQAINKHFQKTLARAEDSGSLKITIPEDQQNEPIHFIADLESLNIRPDSMARIVVNEKTGTIVMGEDVRIATVAVSHGNLNLIISENDQVSQPLPFSEGETVVVPDTSMEVSEDNGNLVVMEMGVSIGDVARALNAIGATPRDLIAIFQAIKAAGALHAELVVL.

The first 24 residues, Met-1–Ala-24, serve as a signal peptide directing secretion.

This sequence belongs to the FlgI family. The basal body constitutes a major portion of the flagellar organelle and consists of four rings (L,P,S, and M) mounted on a central rod.

It localises to the periplasm. It is found in the bacterial flagellum basal body. Its function is as follows. Assembles around the rod to form the L-ring and probably protects the motor/basal body from shearing forces during rotation. The protein is Flagellar P-ring protein of Syntrophotalea carbinolica (strain DSM 2380 / NBRC 103641 / GraBd1) (Pelobacter carbinolicus).